The sequence spans 151 residues: Phosphopantetheine adenylyltransferase (151 aa).

Substrate is bound at residue S9. ATP is bound by residues 9 to 10 (SF) and H17. Positions 41, 73, and 87 each coordinate substrate. ATP-binding positions include 88-90 (GLR), E98, and 122-128 (KAHISST).

It belongs to the bacterial CoaD family. As to quaternary structure, homohexamer. Requires Mg(2+) as cofactor.

The protein resides in the cytoplasm. It catalyses the reaction (R)-4'-phosphopantetheine + ATP + H(+) = 3'-dephospho-CoA + diphosphate. The protein operates within cofactor biosynthesis; coenzyme A biosynthesis; CoA from (R)-pantothenate: step 4/5. Functionally, reversibly transfers an adenylyl group from ATP to 4'-phosphopantetheine, yielding dephospho-CoA (dPCoA) and pyrophosphate. This chain is Phosphopantetheine adenylyltransferase, found in Christiangramia forsetii (strain DSM 17595 / CGMCC 1.15422 / KT0803) (Gramella forsetii).